Here is a 1118-residue protein sequence, read N- to C-terminus: Isoleucine--tRNA ligase (1118 aa).

The short motif at 64–74 (PFANGLPHYGH) is the 'HIGH' region element. Residues 647-651 (KLSKR) carry the 'KMSKS' region motif. Residue Lys-650 participates in ATP binding.

This sequence belongs to the class-I aminoacyl-tRNA synthetase family. IleS type 2 subfamily. As to quaternary structure, monomer. Zn(2+) is required as a cofactor.

It is found in the cytoplasm. The enzyme catalyses tRNA(Ile) + L-isoleucine + ATP = L-isoleucyl-tRNA(Ile) + AMP + diphosphate. Its function is as follows. Catalyzes the attachment of isoleucine to tRNA(Ile). As IleRS can inadvertently accommodate and process structurally similar amino acids such as valine, to avoid such errors it has two additional distinct tRNA(Ile)-dependent editing activities. One activity is designated as 'pretransfer' editing and involves the hydrolysis of activated Val-AMP. The other activity is designated 'posttransfer' editing and involves deacylation of mischarged Val-tRNA(Ile). The sequence is that of Isoleucine--tRNA ligase from Ehrlichia ruminantium (strain Gardel).